Reading from the N-terminus, the 173-residue chain is Dual-action ribosomal maturation protein DarP (173 aa).

The protein belongs to the DarP family.

The protein resides in the cytoplasm. Functionally, member of a network of 50S ribosomal subunit biogenesis factors which assembles along the 30S-50S interface, preventing incorrect 23S rRNA structures from forming. Promotes peptidyl transferase center (PTC) maturation. This Pseudomonas putida (strain W619) protein is Dual-action ribosomal maturation protein DarP.